Reading from the N-terminus, the 385-residue chain is Chaperone protein DnaJ (385 aa).

Residues 5 to 70 (DFYEVLGVSR…QKKAAYDQYG (66 aa)) enclose the J domain. The CR-type zinc-finger motif lies at 137–214 (GVSKEIEVPT…CHGQGRKQKT (78 aa)). Residues C150, C153, C167, C170, C189, C192, C202, and C205 each coordinate Zn(2+). CXXCXGXG motif repeat units follow at residues 150–157 (CDTCDGSG), 167–174 (CGTCHGHG), 189–196 (CPTCHGKG), and 202–209 (CNECHGQG).

Belongs to the DnaJ family. In terms of assembly, homodimer. It depends on Zn(2+) as a cofactor.

The protein resides in the cytoplasm. In terms of biological role, participates actively in the response to hyperosmotic and heat shock by preventing the aggregation of stress-denatured proteins and by disaggregating proteins, also in an autonomous, DnaK-independent fashion. Unfolded proteins bind initially to DnaJ; upon interaction with the DnaJ-bound protein, DnaK hydrolyzes its bound ATP, resulting in the formation of a stable complex. GrpE releases ADP from DnaK; ATP binding to DnaK triggers the release of the substrate protein, thus completing the reaction cycle. Several rounds of ATP-dependent interactions between DnaJ, DnaK and GrpE are required for fully efficient folding. Also involved, together with DnaK and GrpE, in the DNA replication of plasmids through activation of initiation proteins. This chain is Chaperone protein DnaJ, found in Vibrio harveyi (Beneckea harveyi).